The primary structure comprises 435 residues: Enolase (435 aa).

Gln-167 contacts (2R)-2-phosphoglycerate. Glu-209 acts as the Proton donor in catalysis. Mg(2+) is bound by residues Asp-246, Glu-291, and Asp-318. (2R)-2-phosphoglycerate-binding residues include Lys-343, Arg-372, Ser-373, and Lys-394. Lys-343 (proton acceptor) is an active-site residue.

This sequence belongs to the enolase family. As to quaternary structure, component of the RNA degradosome, a multiprotein complex involved in RNA processing and mRNA degradation. Mg(2+) is required as a cofactor.

Its subcellular location is the cytoplasm. The protein resides in the secreted. The protein localises to the cell surface. The enzyme catalyses (2R)-2-phosphoglycerate = phosphoenolpyruvate + H2O. It participates in carbohydrate degradation; glycolysis; pyruvate from D-glyceraldehyde 3-phosphate: step 4/5. Its function is as follows. Catalyzes the reversible conversion of 2-phosphoglycerate (2-PG) into phosphoenolpyruvate (PEP). It is essential for the degradation of carbohydrates via glycolysis. This chain is Enolase, found in Psychromonas ingrahamii (strain DSM 17664 / CCUG 51855 / 37).